The sequence spans 486 residues: Betaine aldehyde dehydrogenase (486 aa).

Positions 23 and 90 each coordinate K(+). 147-149 (GAW) provides a ligand contact to NAD(+). K159 serves as the catalytic Charge relay system. NAD(+) contacts are provided by residues 173 to 176 (KPSE) and 226 to 229 (ESGT). A K(+)-binding site is contributed by L241. The active-site Proton acceptor is the E247. 3 residues coordinate NAD(+): G249, C281, and E382. The active-site Nucleophile is C281. A Cysteine sulfenic acid (-SOH) modification is found at C281. K(+) is bound by residues K452 and G455. Residue E459 is the Charge relay system of the active site.

The protein belongs to the aldehyde dehydrogenase family. As to quaternary structure, dimer of dimers. Requires K(+) as cofactor.

The enzyme catalyses betaine aldehyde + NAD(+) + H2O = glycine betaine + NADH + 2 H(+). Its pathway is amine and polyamine biosynthesis; betaine biosynthesis via choline pathway; betaine from betaine aldehyde: step 1/1. Its function is as follows. Involved in the biosynthesis of the osmoprotectant glycine betaine. Catalyzes the irreversible oxidation of betaine aldehyde to the corresponding acid. This is Betaine aldehyde dehydrogenase from Vibrio campbellii (strain ATCC BAA-1116).